The chain runs to 169 residues: Peptide methionine sulfoxide reductase MsrA (169 aa).

Residue cysteine 10 is part of the active site.

The protein belongs to the MsrA Met sulfoxide reductase family.

The catalysed reaction is L-methionyl-[protein] + [thioredoxin]-disulfide + H2O = L-methionyl-(S)-S-oxide-[protein] + [thioredoxin]-dithiol. It carries out the reaction [thioredoxin]-disulfide + L-methionine + H2O = L-methionine (S)-S-oxide + [thioredoxin]-dithiol. Its function is as follows. Has an important function as a repair enzyme for proteins that have been inactivated by oxidation. Catalyzes the reversible oxidation-reduction of methionine sulfoxide in proteins to methionine. The protein is Peptide methionine sulfoxide reductase MsrA of Streptococcus pyogenes serotype M2 (strain MGAS10270).